Here is an 837-residue protein sequence, read N- to C-terminus: Outer membrane usher protein HifC (837 aa).

The N-terminal stretch at 1 to 26 (MKTKNFPLNKIAFACTLLLANPVAWA) is a signal peptide. A disulfide bond links Cys-813 and Cys-833.

The protein belongs to the fimbrial export usher family.

Its subcellular location is the cell outer membrane. In terms of biological role, essential for piliation. The protein is Outer membrane usher protein HifC (hifC) of Haemophilus influenzae.